We begin with the raw amino-acid sequence, 195 residues long: ATP-dependent Clp protease proteolytic subunit (195 aa).

Serine 101 serves as the catalytic Nucleophile. Histidine 126 is a catalytic residue.

The protein belongs to the peptidase S14 family. Component of the chloroplastic Clp protease core complex.

The protein resides in the plastid. It is found in the chloroplast stroma. It carries out the reaction Hydrolysis of proteins to small peptides in the presence of ATP and magnesium. alpha-casein is the usual test substrate. In the absence of ATP, only oligopeptides shorter than five residues are hydrolyzed (such as succinyl-Leu-Tyr-|-NHMec, and Leu-Tyr-Leu-|-Tyr-Trp, in which cleavage of the -Tyr-|-Leu- and -Tyr-|-Trp bonds also occurs).. Functionally, cleaves peptides in various proteins in a process that requires ATP hydrolysis. Has a chymotrypsin-like activity. Plays a major role in the degradation of misfolded proteins. In Cucumis sativus (Cucumber), this protein is ATP-dependent Clp protease proteolytic subunit.